The primary structure comprises 452 residues: Phosphoglucosamine mutase (452 aa).

Catalysis depends on Ser-97, which acts as the Phosphoserine intermediate. Ser-97, Asp-236, Asp-238, and Asp-240 together coordinate Mg(2+). Ser-97 bears the Phosphoserine mark.

Belongs to the phosphohexose mutase family. Mg(2+) is required as a cofactor. Activated by phosphorylation.

It carries out the reaction alpha-D-glucosamine 1-phosphate = D-glucosamine 6-phosphate. In terms of biological role, catalyzes the conversion of glucosamine-6-phosphate to glucosamine-1-phosphate. The chain is Phosphoglucosamine mutase from Prochlorococcus marinus (strain MIT 9515).